We begin with the raw amino-acid sequence, 61 residues long: U-poneritoxin(01)-Om5a (61 aa).

The first 23 residues, 1–23, serve as a signal peptide directing secretion; sequence MKLSALSLAFAIILMMTIMYTKA. A propeptide spanning residues 24–41 is cleaved from the precursor; the sequence is DADASADAEADADAEAEA. Position 59 is a glutamine amide (glutamine 59).

It belongs to the formicidae venom precursor-01 superfamily. Post-translationally, truncated sequences of this peptide have also been found in the venom. It is possible they have been cleaved in the venom. As to expression, expressed by the venom gland.

The protein resides in the secreted. Acidic peptide with potent hemolytic activities (94.8% at 50 uM). It also shows low antimicrobial activities against E.coli (MIC=50uM), as well as histamine-releasing activity (28.3% at 10 uM). Does not have activity against S.aureus, and S.cerevisiae. In Odontomachus monticola (Trap-jaw ant), this protein is U-poneritoxin(01)-Om5a.